A 557-amino-acid polypeptide reads, in one-letter code: TBCC domain-containing protein 1 (557 aa).

The 146-residue stretch at 290 to 435 folds into the C-CAP/cofactor C-like domain; sequence TTKRAKIACN…LEDHMARTGL (146 aa).

This sequence belongs to the TBCC family.

It is found in the cytoplasm. Its subcellular location is the cytoskeleton. It localises to the microtubule organizing center. The protein localises to the centrosome. The protein resides in the spindle pole. In terms of biological role, plays a role in the regulation of centrosome and Golgi apparatus positioning, with consequences on cell shape and cell migration. The polypeptide is TBCC domain-containing protein 1 (TBCCD1) (Bos taurus (Bovine)).